The sequence spans 284 residues: NAD kinase (284 aa).

Asp60 functions as the Proton acceptor in the catalytic mechanism. NAD(+) contacts are provided by residues Asp60–Gly61, Asn134–Glu135, Arg145, Lys162, Asp164, Thr175–Ser180, and Gln234.

This sequence belongs to the NAD kinase family. The cofactor is a divalent metal cation.

Its subcellular location is the cytoplasm. The enzyme catalyses NAD(+) + ATP = ADP + NADP(+) + H(+). In terms of biological role, involved in the regulation of the intracellular balance of NAD and NADP, and is a key enzyme in the biosynthesis of NADP. Catalyzes specifically the phosphorylation on 2'-hydroxyl of the adenosine moiety of NAD to yield NADP. The sequence is that of NAD kinase from Clostridium botulinum (strain Eklund 17B / Type B).